Consider the following 249-residue polypeptide: Tetraspanin-7 (249 aa).

Residues 1 to 16 (MASRRMETKPVITCLK) are Cytoplasmic-facing. The chain crosses the membrane as a helical span at residues 17 to 40 (TLLIIYSFVFWITGVILLAVGVWG). Over 41–56 (KLTLGTYISLIAENST) the chain is Extracellular. Asparagine 54 carries N-linked (GlcNAc...) asparagine glycosylation. The helical transmembrane segment at 57 to 75 (NAPYVLIGTGTTIVVFGLF) threads the bilayer. The Cytoplasmic portion of the chain corresponds to 76–86 (GCFATCRGSPW). Residues 87–112 (MLKLYAMFLSLVFLAELVAGISGFVF) form a helical membrane-spanning segment. Topologically, residues 113–213 (RHEIKDTFLR…LVTSFMETNM (101 aa)) are extracellular. Residues asparagine 155, asparagine 158, asparagine 177, and asparagine 188 are each glycosylated (N-linked (GlcNAc...) asparagine). A helical membrane pass occupies residues 214 to 234 (GIIAGVAFGIAFSQLIGMLLA). Over 235–249 (CCLSRFITANQYEMV) the chain is Cytoplasmic.

It belongs to the tetraspanin (TM4SF) family. (Microbial infection) Interacts with herpes simplex virus 1 (HHV-1) UL35. Not solely expressed in T-cells. Expressed in acute myelocytic leukemia cells of some patients.

The protein resides in the membrane. Functionally, may be involved in cell proliferation and cell motility. This chain is Tetraspanin-7 (TSPAN7), found in Homo sapiens (Human).